The sequence spans 941 residues: ATP-dependent 6-phosphofructokinase subunit beta (941 aa).

Residues 2–558 (PDASLFNGTS…HMKNFISTNS (557 aa)) form an N-terminal catalytic PFK domain 1 region. ATP is bound by residues Gly-191, 255–256 (RC), and 285–288 (GDGS). Mg(2+) is bound at residue Asp-286. Residues 331–333 (SID), Arg-368, 375–377 (MGR), Glu-432, Arg-460, and 466–469 (HVQR) each bind beta-D-fructose 6-phosphate. The active-site Proton acceptor is Asp-333. The interval 559–572 (ADHVPPSLPLEKRK) is interdomain linker. A C-terminal regulatory PFK domain 2 region spans residues 573-941 (KVAIINVGAP…SDMLSGRTSL (369 aa)). Beta-D-fructose 2,6-bisphosphate-binding positions include Arg-643, 701 to 705 (TISNN), Arg-739, 746 to 748 (QGG), Glu-806, Lys-832, 838 to 841 (HVQQ), and Arg-918.

Belongs to the phosphofructokinase type A (PFKA) family. ATP-dependent PFK group I subfamily. Eukaryotic two domain clade 'E' sub-subfamily. Heterododecamer of 4 alpha, 4 beta and 4 gamma chains. The gamma chain bridges the N-terminal halves of the alpha and beta subunits. It depends on Mg(2+) as a cofactor.

It is found in the cytoplasm. The catalysed reaction is beta-D-fructose 6-phosphate + ATP = beta-D-fructose 1,6-bisphosphate + ADP + H(+). The protein operates within carbohydrate degradation; glycolysis; D-glyceraldehyde 3-phosphate and glycerone phosphate from D-glucose: step 3/4. With respect to regulation, allosterically activated by ADP, AMP, or fructose 2,6-bisphosphate, and allosterically inhibited by ATP or citrate. Catalyzes the phosphorylation of D-fructose 6-phosphate to fructose 1,6-bisphosphate by ATP, the first committing step of glycolysis. The polypeptide is ATP-dependent 6-phosphofructokinase subunit beta (PFK2) (Komagataella phaffii (strain GS115 / ATCC 20864) (Yeast)).